A 56-amino-acid polypeptide reads, in one-letter code: Ovomucoid (56 aa).

In terms of domain architecture, Kazal-like spans 6–56 (VDCSEYPKPECTAEERPICGSDNKTYGNKCNFCNAVVESNGTLTLRNFGKC). 3 disulfides stabilise this stretch: Cys-8/Cys-38, Cys-16/Cys-35, and Cys-24/Cys-56. A glycan (N-linked (GlcNAc...) asparagine) is linked at Asn-45.

Its subcellular location is the secreted. This Bambusicola thoracicus (Chinese bamboo-partridge) protein is Ovomucoid.